The primary structure comprises 185 residues: Elongation factor P (185 aa).

This sequence belongs to the elongation factor P family.

Its subcellular location is the cytoplasm. The protein operates within protein biosynthesis; polypeptide chain elongation. In terms of biological role, involved in peptide bond synthesis. Stimulates efficient translation and peptide-bond synthesis on native or reconstituted 70S ribosomes in vitro. Probably functions indirectly by altering the affinity of the ribosome for aminoacyl-tRNA, thus increasing their reactivity as acceptors for peptidyl transferase. The polypeptide is Elongation factor P (Limosilactobacillus fermentum (strain NBRC 3956 / LMG 18251) (Lactobacillus fermentum)).